A 371-amino-acid chain; its full sequence is Protein NDRG2 (371 aa).

The segment at methionine 1–glutamate 22 is disordered. Alanine 2 carries the post-translational modification N-acetylalanine. Threonine 20 is modified (phosphothreonine). A phosphoserine mark is found at serine 326 and serine 328. At threonine 330 the chain carries Phosphothreonine. Position 332 is a phosphoserine (serine 332). Phosphothreonine is present on threonine 334. The disordered stretch occupies residues threonine 334 to cysteine 371. A phosphoserine mark is found at serine 335, serine 338, and serine 344. The residue at position 348 (threonine 348) is a Phosphothreonine. Phosphoserine occurs at positions 350, 352, 353, and 355. Threonine 357 is modified (phosphothreonine). The residue at position 370 (serine 370) is a Phosphoserine.

This sequence belongs to the NDRG family. Broadly expressed, with highest levels in heart, liver, skeletal muscle and aorta.

It is found in the cytoplasm. It localises to the perinuclear region. Its subcellular location is the cell projection. The protein resides in the growth cone. Its function is as follows. Contributes to the regulation of the Wnt signaling pathway. Down-regulates CTNNB1-mediated transcriptional activation of target genes, such as CCND1, and may thereby act as tumor suppressor. May be involved in dendritic cell and neuron differentiation. The polypeptide is Protein NDRG2 (Ndrg2) (Rattus norvegicus (Rat)).